A 91-amino-acid chain; its full sequence is MIDKQKTIQTYAKSANDTGSTAVQVALLTERINNLSRHLTENKKDKHGQRGLQLLNGQRRRLLKYLERTNYDEYIALTDRLGIRRGQRIVR.

This sequence belongs to the universal ribosomal protein uS15 family. Part of the 30S ribosomal subunit. Forms a bridge to the 50S subunit in the 70S ribosome, contacting the 23S rRNA.

One of the primary rRNA binding proteins, it binds directly to 16S rRNA where it helps nucleate assembly of the platform of the 30S subunit by binding and bridging several RNA helices of the 16S rRNA. Its function is as follows. Forms an intersubunit bridge (bridge B4) with the 23S rRNA of the 50S subunit in the ribosome. The polypeptide is Small ribosomal subunit protein uS15 (Deinococcus geothermalis (strain DSM 11300 / CIP 105573 / AG-3a)).